The chain runs to 81 residues: RNA-binding protein Hfq (81 aa).

The region spanning 10 to 70 (DLFLNSVRKS…ISTIMPSQPV (61 aa)) is the Sm domain.

This sequence belongs to the Hfq family. Homohexamer.

RNA chaperone that binds small regulatory RNA (sRNAs) and mRNAs to facilitate mRNA translational regulation in response to envelope stress, environmental stress and changes in metabolite concentrations. Also binds with high specificity to tRNAs. The polypeptide is RNA-binding protein Hfq (Mesorhizobium japonicum (strain LMG 29417 / CECT 9101 / MAFF 303099) (Mesorhizobium loti (strain MAFF 303099))).